Here is a 102-residue protein sequence, read N- to C-terminus: RNA-binding protein Hfq (102 aa).

One can recognise a Sm domain in the interval 9–68 (DPFLNALRRERVPVSIYLVNGIKLQGQIESFDQFVILLKNTVSQMVYKHAISTVVPSRPV). The disordered stretch occupies residues 63 to 102 (VPSRPVSHHSNNAGGGTSSNYHHGSSAQGTSAQQDSEETE). The segment covering 70–96 (HHSNNAGGGTSSNYHHGSSAQGTSAQQ) has biased composition (polar residues).

Belongs to the Hfq family. As to quaternary structure, homohexamer.

RNA chaperone that binds small regulatory RNA (sRNAs) and mRNAs to facilitate mRNA translational regulation in response to envelope stress, environmental stress and changes in metabolite concentrations. Also binds with high specificity to tRNAs. In Citrobacter koseri (strain ATCC BAA-895 / CDC 4225-83 / SGSC4696), this protein is RNA-binding protein Hfq.